Reading from the N-terminus, the 151-residue chain is Small ribosomal subunit protein uS15 (151 aa).

Belongs to the universal ribosomal protein uS15 family.

This Plutella xylostella (Diamondback moth) protein is Small ribosomal subunit protein uS15 (RpS13).